The primary structure comprises 663 residues: Nucleolar complex-associated protein 3 (663 aa).

Residues 1–132 (MAKRNRSQFR…AKEDEPDTEE (132 aa)) form a disordered region. Positions 82–97 (GKVERKLHKAQEKPKD) are enriched in basic and acidic residues. Over residues 98 to 130 (DDEEDEDSNDSSEDDEGPNEEQEAEAKEDEPDT) the composition is skewed to acidic residues. Residues 363–408 (KKDRVHLSKKQRKARKEMQQIEEEMRNAEQAVSAEERERNQSEILK) adopt a coiled-coil conformation. Ser-395 carries the phosphoserine modification.

It belongs to the CBF/MAK21 family. In terms of assembly, forms a heterodimer with NOC2. This complex may be associated with pre-ribosomal particles. Also interacts with MCM2, MCM5 and ORC1.

It is found in the nucleus. Its subcellular location is the nucleolus. Functionally, required for synthesis of 60S ribosomal subunits and the transport of pre-ribosomes from the nucleoplasm to the cytoplasm. Also required for initiation of DNA replication. May function downstream of the origin recognition complex (ORC complex) in the loading of CDC6 and the minichromosome maintenance complex (MCM complex) onto chromatin during the G1 phase of the cell cycle. Essential for growth. The sequence is that of Nucleolar complex-associated protein 3 (NOC3) from Saccharomyces cerevisiae (strain ATCC 204508 / S288c) (Baker's yeast).